A 561-amino-acid polypeptide reads, in one-letter code: Small ribosomal subunit protein bS1 (561 aa).

S1 motif domains are found at residues 22-88 (GEVI…LSRE), 106-172 (GDIL…VSRR), 193-261 (GSVI…LGMK), 278-348 (GTRL…LGMK), 365-435 (GDKI…LGIK), and 452-521 (GSLV…LSVK).

It belongs to the bacterial ribosomal protein bS1 family.

In terms of biological role, binds mRNA; thus facilitating recognition of the initiation point. It is needed to translate mRNA with a short Shine-Dalgarno (SD) purine-rich sequence. The polypeptide is Small ribosomal subunit protein bS1 (rpsA) (Neisseria meningitidis serogroup B (strain ATCC BAA-335 / MC58)).